A 174-amino-acid polypeptide reads, in one-letter code: Nucleoside-triphosphatase THEP1 (174 aa).

ATP is bound by residues 7–14 (GRPGVGKT) and 94–101 (LIIVDEIG).

It belongs to the THEP1 NTPase family.

It catalyses the reaction a ribonucleoside 5'-triphosphate + H2O = a ribonucleoside 5'-diphosphate + phosphate + H(+). In terms of biological role, has nucleotide phosphatase activity towards ATP, GTP, CTP, TTP and UTP. May hydrolyze nucleoside diphosphates with lower efficiency. This is Nucleoside-triphosphatase THEP1 from Thermotoga maritima (strain ATCC 43589 / DSM 3109 / JCM 10099 / NBRC 100826 / MSB8).